Consider the following 436-residue polypeptide: 3-ketoacyl-CoA thiolase (436 aa).

The active-site Acyl-thioester intermediate is the Cys99. Residues His392 and Cys422 each act as proton acceptor in the active site.

Belongs to the thiolase-like superfamily. Thiolase family. As to quaternary structure, heterotetramer of two alpha chains (FadJ) and two beta chains (FadI).

The protein localises to the cytoplasm. The enzyme catalyses an acyl-CoA + acetyl-CoA = a 3-oxoacyl-CoA + CoA. It functions in the pathway lipid metabolism; fatty acid beta-oxidation. Functionally, catalyzes the final step of fatty acid oxidation in which acetyl-CoA is released and the CoA ester of a fatty acid two carbons shorter is formed. The polypeptide is 3-ketoacyl-CoA thiolase (Escherichia coli O8 (strain IAI1)).